Reading from the N-terminus, the 191-residue chain is Programmed cell death protein 6 (191 aa).

Ala-2 bears the N-acetylalanine mark. EF-hand domains lie at 23–58 (PDQSFLWNVFQRVDKDRSGVISDNELQQALSNGTWT), 59–89 (PFNPVTVRSIISMFDRENKAGVNFSEFTGVW), 90–125 (KYITDWQNVFRTYDRDNSGMIDKNELKQALSGFGYR), 126–161 (LSDQFHDILIRKFDRQGRGQIAFDDFIQGCIVLQRL), and 162–191 (TDIFRRYDTDQDGWIQVSYEQYLSMVFSIV). Ca(2+)-binding residues include Asp-36, Asp-38, Ser-40, Val-42, and Glu-47. Positions 103, 105, 107, 109, and 114 each coordinate Ca(2+). Positions 169, 171, 173, and 175 each coordinate Mg(2+).

As to quaternary structure, homodimer and heterodimer; heterodimerizes (via the EF-hand 5) with PEF1. Isoform 1 and isoform 2 self-associate; probably forming homodimers. Interacts with CPNE4 (via VWFA domain). Interacts with PDCD6IP; the interaction is calcium-dependent. Interacts with RBM22. Interacts with PLSCR4. Interacts with ANXA7 and TSG101. Interacts with DAPK1. Interacts with SEC31A; the interaction is calcium-dependent and promotes monoubiquitination of SEC31A. Interacts with ANXA11 (via N-terminus); the interaction is calcium-dependent. Interacts with PLSCR3 (via N-terminus); the interaction is calcium-dependent. Interacts with MCOLN1; the interaction is calcium-dependent. Interacts with KDR; the interaction is calcium-dependent. Interacts with HEBP2; the interaction is calcium-dependent. Interacts with TFG. Isoform 1: Interacts with SHISA5, leading to stabilize it. Isoform 2: Does not interact with SHISA5. Isoform 2: Does not interact with PDCD6IP, TSG101, ANXA7 and ANXA11.

It is found in the endoplasmic reticulum membrane. The protein resides in the cytoplasmic vesicle. Its subcellular location is the COPII-coated vesicle membrane. It localises to the cytoplasm. The protein localises to the nucleus. It is found in the endosome. In terms of biological role, calcium sensor that plays a key role in processes such as endoplasmic reticulum (ER)-Golgi vesicular transport, endosomal biogenesis or membrane repair. Acts as an adapter that bridges unrelated proteins or stabilizes weak protein-protein complexes in response to calcium: calcium-binding triggers exposure of apolar surface, promoting interaction with different sets of proteins thanks to 3 different hydrophobic pockets, leading to translocation to membranes. Involved in ER-Golgi transport by promoting the association between PDCD6IP and TSG101, thereby bridging together the ESCRT-III and ESCRT-I complexes. Together with PEF1, acts as a calcium-dependent adapter for the BCR(KLHL12) complex, a complex involved in ER-Golgi transport by regulating the size of COPII coats. In response to cytosolic calcium increase, the heterodimer formed with PEF1 interacts with, and bridges together the BCR(KLHL12) complex and SEC31 (SEC31A or SEC31B), promoting monoubiquitination of SEC31 and subsequent collagen export, which is required for neural crest specification. Involved in the regulation of the distribution and function of MCOLN1 in the endosomal pathway. Promotes localization and polymerization of TFG at endoplasmic reticulum exit site. Required for T-cell receptor-, Fas-, and glucocorticoid-induced apoptosis. May mediate Ca(2+)-regulated signals along the death pathway: interaction with DAPK1 can accelerate apoptotic cell death by increasing caspase-3 activity. Its role in apoptosis may however be indirect, as suggested by knockout experiments. May inhibit KDR/VEGFR2-dependent angiogenesis; the function involves inhibition of VEGF-induced phosphorylation of the Akt signaling pathway. Has a lower Ca(2+) affinity than isoform 1. This Mus musculus (Mouse) protein is Programmed cell death protein 6 (Pdcd6).